Consider the following 152-residue polypeptide: Large ribosomal subunit protein bL9 (152 aa).

The protein belongs to the bacterial ribosomal protein bL9 family.

Its function is as follows. Binds to the 23S rRNA. This Nocardia farcinica (strain IFM 10152) protein is Large ribosomal subunit protein bL9.